A 277-amino-acid chain; its full sequence is Anamorsin homolog (277 aa).

The N-terminal SAM-like domain stretch occupies residues M1–K160. The linker stretch occupies residues S161–L188. [2Fe-2S] cluster is bound by residues C199, C208, C211, and C213. The fe-S binding site A stretch occupies residues C199–C213. The [4Fe-4S] cluster site is built by C238, C241, C249, and C252. Short sequence motifs (cx2C motif) lie at residues C238 to C241 and C249 to C252. The tract at residues C238 to C252 is fe-S binding site B.

Belongs to the anamorsin family. In terms of assembly, monomer. The cofactor is [2Fe-2S] cluster. [4Fe-4S] cluster serves as cofactor.

The protein localises to the cytoplasm. The protein resides in the mitochondrion intermembrane space. Component of the cytosolic iron-sulfur (Fe-S) protein assembly (CIA) machinery. Required for the maturation of extramitochondrial Fe-S proteins. Part of an electron transfer chain functioning in an early step of cytosolic Fe-S biogenesis, facilitating the de novo assembly of a [4Fe-4S] cluster on the cytosolic Fe-S scaffold complex. Electrons are transferred from NADPH via a FAD- and FMN-containing diflavin oxidoreductase. Together with the diflavin oxidoreductase, also required for the assembly of the diferric tyrosyl radical cofactor of ribonucleotide reductase (RNR), probably by providing electrons for reduction during radical cofactor maturation in the catalytic small subunit. The polypeptide is Anamorsin homolog (Populus trichocarpa (Western balsam poplar)).